The primary structure comprises 63 residues: MRCFPVFIILLLLMASAPSFDARPKTEDDVPLSSFRDNLKRTLRTLLDPRRCCYETPGCCVIG.

The signal sequence occupies residues 1–22 (MRCFPVFIILLLLMASAPSFDA). Positions 23–49 (RPKTEDDVPLSSFRDNLKRTLRTLLDP) are excised as a propeptide. Position 62 is an isoleucine amide (Ile-62).

The protein belongs to the conotoxin T superfamily. In terms of processing, contains 2 disulfide bonds that can be either 'C1-C3, C2-C4' or 'C1-C4, C2-C3', since these disulfide connectivities have been observed for conotoxins with cysteine framework V (for examples, see AC P0DQQ7 and AC P81755). Expressed by the venom duct.

Its subcellular location is the secreted. The chain is Conotoxin Pn-B01411 from Conus pennaceus (Feathered cone).